Here is a 522-residue protein sequence, read N- to C-terminus: F-box-like/WD repeat-containing protein TBL1Y (522 aa).

Ser-2 is modified (N-acetylserine). A LisH domain is found at Thr-4 to Gln-36. The F-box-like domain maps to Gly-41–Ala-86. Lys-102 is subject to N6-acetyllysine. Ser-130 is modified (phosphoserine). WD repeat units lie at residues Gly-177–Ser-216, Pro-233–Leu-272, Gln-274–Gln-313, Phe-316–Thr-354, Gly-357–Asp-396, Ala-399–Thr-447, Lys-450–Ser-489, and Gln-491–Asp-521. Residue Lys-287 forms a Glycyl lysine isopeptide (Lys-Gly) (interchain with G-Cter in SUMO2) linkage.

It belongs to the WD repeat EBI family. As to quaternary structure, probable component of the N-Cor repressor complex and some E3 ubiquitin ligase complex. Interacts with NCOR2. Fetal brain and prostate. Expressed in the cochlear spiral ganglion neurons, and in outer and inner hair cells.

Its subcellular location is the nucleus. Functionally, F-box-like protein involved in the recruitment of the ubiquitin/19S proteasome complex to nuclear receptor-regulated transcription units. Plays an essential role in transcription activation mediated by nuclear receptors. Probably acts as integral component of corepressor complexes that mediates the recruitment of the 19S proteasome complex, leading to the subsequent proteasomal degradation of transcription repressor complexes, thereby allowing cofactor exchange. This is F-box-like/WD repeat-containing protein TBL1Y (TBL1Y) from Homo sapiens (Human).